The following is a 318-amino-acid chain: Death effector domain-containing protein (318 aa).

The 79-residue stretch at 25–103 folds into the DED domain; that stretch reads SLHRMFDIVG…RHDLLPYVTL (79 aa). Positions 128–191 are disordered; sequence PRALSDPEPR…SVTPDPKEKQ (64 aa).

Interacts with CASP8, CASP10, KRT8, KRT18, CASP3 and FADD. Homodimerizes and heterodimerizes with DEDD2. Post-translationally, exists predominantly in a mono- or diubiquitinated form. In terms of tissue distribution, widely expressed with highest levels in testis. Within the testis, highly expressed in germ cells but not expressed in Sertoli cells.

It is found in the cytoplasm. Its subcellular location is the nucleus. It localises to the nucleolus. Functionally, a scaffold protein that directs CASP3 to certain substrates and facilitates their ordered degradation during apoptosis. May also play a role in mediating CASP3 cleavage of KRT18. Regulates degradation of intermediate filaments during apoptosis. May play a role in the general transcription machinery in the nucleus and might be an important regulator of the activity of GTF3C3. Inhibits DNA transcription in vitro. The protein is Death effector domain-containing protein (Dedd) of Rattus norvegicus (Rat).